A 340-amino-acid chain; its full sequence is Serine racemase (340 aa).

Position 13 (E13) interacts with Mg(2+). 5 residues coordinate ATP: S31, S32, I33, K51, and T52. K56 acts as the Proton acceptor in catalysis. K56 carries the post-translational modification N6-(pyridoxal phosphate)lysine. Ca(2+)-binding residues include P69 and T81. The Proton acceptor role is filled by S84. Position 86 (N86) interacts with pyridoxal 5'-phosphate. An ATP-binding site is contributed by Q89. Residue C113 is modified to S-nitrosocysteine. Y121 provides a ligand contact to ATP. N154 is a pyridoxal 5'-phosphate binding site. A Mg(2+)-binding site is contributed by D178. Pyridoxal 5'-phosphate-binding residues include G185, G186, G187, G188, and M189. 4 residues coordinate Mg(2+): E210, A214, D216, and N247. Residues E210, A214, D216, and N247 each coordinate Ca(2+). Positions 210, 214, and 216 each coordinate Mn(2+). K279 is an ATP binding site. Residue S313 participates in pyridoxal 5'-phosphate binding. N316 contributes to the ATP binding site.

It belongs to the serine/threonine dehydratase family. In terms of assembly, homodimer. Mg(2+) is required as a cofactor. It depends on Mn(2+) as a cofactor. The cofactor is Ca(2+). Pyridoxal 5'-phosphate serves as cofactor. In terms of processing, S-nitrosylated, leading to decrease the enzyme activity. As to expression, expressed in the cerebellum, hippocampus, dorsolateral prefrontal cortex, and in motor neurons and glial cells of the lumbar spinal cord (at protein level). Increased in the dorsolateral prefrontal cortex of schizophrenic patients (at protein level). Brain: expressed at high levels in hippocampus and corpus callosum, intermediate levels in substantia nigra and caudate, and low levels in amygdala, thalamus, and subthalamic nuclei. Expressed in heart, skeletal muscle, kidney, and liver.

The enzyme catalyses L-serine = D-serine. It catalyses the reaction D-serine = pyruvate + NH4(+). It carries out the reaction L-serine = pyruvate + NH4(+). Allosterically activated by magnesium, and possibly also other divalent metal cations. Allosterically activated by ATP, ADP or GTP. Competitively inhibited by malonate. Inhibited by meso-tartrate and malonate. Functionally, catalyzes the synthesis of D-serine from L-serine. D-serine is a key coagonist with glutamate at NMDA receptors. Has dehydratase activity towards both L-serine and D-serine. The protein is Serine racemase (SRR) of Homo sapiens (Human).